A 146-amino-acid chain; its full sequence is MIIGIGSDLIDITRIAKVIERHGERFLDRVFTEAERAKAERRAKKSELVAATYAKRFAAKEACSKALGTGIRQGVWWRDMGVVNLPGGRPTMVLTGGAKTRLDALTPPGMTARIDLSITDEWPLAQAFVVISAVQAAAEQAGATSS.

Asp-8 and Glu-61 together coordinate Mg(2+).

This sequence belongs to the P-Pant transferase superfamily. AcpS family. The cofactor is Mg(2+).

Its subcellular location is the cytoplasm. The catalysed reaction is apo-[ACP] + CoA = holo-[ACP] + adenosine 3',5'-bisphosphate + H(+). Functionally, transfers the 4'-phosphopantetheine moiety from coenzyme A to a Ser of acyl-carrier-protein. The sequence is that of Holo-[acyl-carrier-protein] synthase from Rhodopseudomonas palustris (strain TIE-1).